The following is a 232-amino-acid chain: Ribonuclease HII (232 aa).

The region spanning 26 to 218 is the RNase H type-2 domain; that stretch reads RILCGVDEAG…VRRALEGMSA (193 aa). A divalent metal cation is bound by residues Asp-32, Glu-33, and Asp-127.

This sequence belongs to the RNase HII family. Mn(2+) serves as cofactor. Requires Mg(2+) as cofactor.

The protein localises to the cytoplasm. The catalysed reaction is Endonucleolytic cleavage to 5'-phosphomonoester.. Functionally, endonuclease that specifically degrades the RNA of RNA-DNA hybrids. This Ralstonia pickettii (strain 12J) protein is Ribonuclease HII.